Here is a 121-residue protein sequence, read N- to C-terminus: Basic phospholipase A2 BmjeTX-II (121 aa).

Intrachain disulfides connect C26–C114, C28–C45, C44–C95, C50–C121, C51–C88, C58–C82, and C76–C86. Positions 27, 29, and 31 each coordinate Ca(2+). The active site involves H48. D49 contributes to the Ca(2+) binding site. Residue D89 is part of the active site.

Ca(2+) serves as cofactor. As to expression, expressed by the venom gland.

It localises to the secreted. The enzyme catalyses a 1,2-diacyl-sn-glycero-3-phosphocholine + H2O = a 1-acyl-sn-glycero-3-phosphocholine + a fatty acid + H(+). Its function is as follows. Snake venom phospholipase A2 (PLA2) that induces blockade of neuromuscular contraction in an indirectly stimulated chick biventer cervicis nerve-muscle preparation. Does not inhibit contraction of chick biventer cervicic nerve-muscle preparation in response to treatment with acetylcholine or KCl. The neuromuscular blockade is mediated by inhibitory action at the presynaptic motor nerve endings. Lyses skeletal myoblasts and myotubes in vitro, and intramuscular injection causes local muscle necrosis. Induces edema in the mouse foot pad. Induces a transient increase of IL-6 levels. PLA2 catalyzes the calcium-dependent hydrolysis of the 2-acyl groups in 3-sn-phosphoglycerides. The chain is Basic phospholipase A2 BmjeTX-II from Bothrops marajoensis (Marajo lancehead).